Reading from the N-terminus, the 356-residue chain is Phosphate acyltransferase (356 aa).

It belongs to the PlsX family. Homodimer. Probably interacts with PlsY.

The protein resides in the cytoplasm. The catalysed reaction is a fatty acyl-[ACP] + phosphate = an acyl phosphate + holo-[ACP]. It participates in lipid metabolism; phospholipid metabolism. Catalyzes the reversible formation of acyl-phosphate (acyl-PO(4)) from acyl-[acyl-carrier-protein] (acyl-ACP). This enzyme utilizes acyl-ACP as fatty acyl donor, but not acyl-CoA. This chain is Phosphate acyltransferase, found in Bartonella henselae (strain ATCC 49882 / DSM 28221 / CCUG 30454 / Houston 1) (Rochalimaea henselae).